The sequence spans 373 residues: 2-aminoethylphosphonate--pyruvate transaminase (373 aa).

Residue Lys191 is modified to N6-(pyridoxal phosphate)lysine.

The protein belongs to the class-V pyridoxal-phosphate-dependent aminotransferase family. PhnW subfamily. In terms of assembly, homodimer. The cofactor is pyridoxal 5'-phosphate.

The enzyme catalyses (2-aminoethyl)phosphonate + pyruvate = phosphonoacetaldehyde + L-alanine. Functionally, involved in phosphonate degradation. The chain is 2-aminoethylphosphonate--pyruvate transaminase from Burkholderia ambifaria (strain MC40-6).